The chain runs to 117 residues: Anti-sigma F factor antagonist (117 aa).

Residues 2-115 (HFQLEMVTRE…QAIDRVRGIV (114 aa)) form the STAS domain. S58 carries the phosphoserine modification.

The protein belongs to the anti-sigma-factor antagonist family. Post-translationally, phosphorylated by SpoIIAB on a serine residue.

Its function is as follows. In the phosphorylated form it could act as an anti-anti-sigma factor that counteracts SpoIIAB and thus releases sigma f from inhibition. The protein is Anti-sigma F factor antagonist (spoIIAA) of Lysinibacillus sphaericus (Bacillus sphaericus).